The chain runs to 116 residues: Non-specific lipid-transfer protein (116 aa).

A signal peptide spans 1 to 22; the sequence is MSLKLACVVVLCMVVGAPLAQG. 3 cysteine pairs are disulfide-bonded: C36–C52, C53–C98, and C73–C112.

It belongs to the plant LTP family.

In terms of biological role, plant non-specific lipid-transfer proteins transfer phospholipids as well as galactolipids across membranes. May play a role in wax or cutin deposition in the cell walls of expanding epidermal cells and certain secretory tissues. The polypeptide is Non-specific lipid-transfer protein (Gossypium hirsutum (Upland cotton)).